We begin with the raw amino-acid sequence, 154 residues long: Ubiquitin-conjugating enzyme E2 L3 (154 aa).

Positions Ala-2–Glu-149 constitute a UBC core domain. Cys-86 acts as the Glycyl thioester intermediate in catalysis. At Lys-131 the chain carries N6-acetyllysine.

It belongs to the ubiquitin-conjugating enzyme family. In terms of assembly, interacts with PRKN; involved in ubiquitination and degradation of misfolded proteins. Interacts with UBE3A. Interacts with CCNB1IP1, CBL, ZAP70, RNF19A, RNF19B and RNF144B. Interacts with ARIH1. Interacts with ARIH2 (via RING-type 1). Interacts with NCOA1; they functionally interact to regulate progesterone receptor transcriptional activity. Interacts with NDFIP1 (via N-terminus); the interaction mediates recruitment of UBE2L3 to ITCH and causes MAP3K7 ubiquitination. Post-translationally, ubiquitinated. The alteration of UBE2L3 protein levels during the S-phase of the cell cycle is due to ubiquitin-dependent proteasomal degradation. Autoubiquitinated in vitro.

Its subcellular location is the nucleus. The protein resides in the cytoplasm. The catalysed reaction is S-ubiquitinyl-[E1 ubiquitin-activating enzyme]-L-cysteine + [E2 ubiquitin-conjugating enzyme]-L-cysteine = [E1 ubiquitin-activating enzyme]-L-cysteine + S-ubiquitinyl-[E2 ubiquitin-conjugating enzyme]-L-cysteine.. It functions in the pathway protein modification; protein ubiquitination. Functionally, ubiquitin-conjugating enzyme E2 that specifically acts with HECT-type and RBR family E3 ubiquitin-protein ligases. Does not function with most RING-containing E3 ubiquitin-protein ligases because it lacks intrinsic E3-independent reactivity with lysine: in contrast, it has activity with the RBR family E3 enzymes, such as PRKN, RNF31 and ARIH1, that function like RING-HECT hybrids. Accepts ubiquitin from the E1 complex and catalyzes its covalent attachment to other proteins. Mediates ubiquitination by the CUL9-RBX1 complex. In vitro catalyzes 'Lys-11'-linked polyubiquitination. Involved in the selective degradation of short-lived and abnormal proteins. Down-regulated during the S-phase it is involved in progression through the cell cycle. Regulates nuclear hormone receptors transcriptional activity. May play a role in myelopoiesis. The polypeptide is Ubiquitin-conjugating enzyme E2 L3 (UBE2L3) (Pongo abelii (Sumatran orangutan)).